A 353-amino-acid polypeptide reads, in one-letter code: DNA-directed RNA polymerase subunit alpha (353 aa).

Residues 1-234 (MVQEKVRVST…DLFIPFLHTE (234 aa)) are alpha N-terminal domain (alpha-NTD). Positions 266–353 (KKIALKSIFI…LAQSIYSESG (88 aa)) are alpha C-terminal domain (alpha-CTD).

It belongs to the RNA polymerase alpha chain family. In terms of assembly, in plastids the minimal PEP RNA polymerase catalytic core is composed of four subunits: alpha, beta, beta', and beta''. When a (nuclear-encoded) sigma factor is associated with the core the holoenzyme is formed, which can initiate transcription.

It localises to the plastid. The protein resides in the chloroplast. It catalyses the reaction RNA(n) + a ribonucleoside 5'-triphosphate = RNA(n+1) + diphosphate. Its function is as follows. DNA-dependent RNA polymerase catalyzes the transcription of DNA into RNA using the four ribonucleoside triphosphates as substrates. This chain is DNA-directed RNA polymerase subunit alpha, found in Panax ginseng (Korean ginseng).